Reading from the N-terminus, the 154-residue chain is Interleukin-7 (154 aa).

The signal sequence occupies residues 1–25 (MFHVSFRYIFGIPPLILVLLPVTSS). Intrachain disulfides connect C27/C145, C58/C133, and C71/C116. N94 and N115 each carry an N-linked (GlcNAc...) asparagine glycan.

The protein belongs to the IL-7/IL-9 family. In terms of assembly, interacts with IL7R and CSF2RG. In terms of processing, three disulfide bonds are present.

It localises to the secreted. Its function is as follows. Hematopoietic cytokine that plays an essential role in the development, expansion, and survival of naive and memory T-cells and B-cells thereby regulating the number of mature lymphocytes and maintaining lymphoid homeostasis. Mechanistically, exerts its biological effects through a receptor composed of IL7RA subunit and the cytokine receptor common subunit gamma/CSF2RG. Binding to the receptor leads to activation of various kinases including JAK1 or JAK3 depending on the cell type and subsequently propagation of signals through activation of several downstream signaling pathways including the PI3K/Akt/mTOR or the JAK-STAT5. This is Interleukin-7 (Il7) from Rattus norvegicus (Rat).